A 292-amino-acid chain; its full sequence is Bifunctional protein FolD (292 aa).

NADP(+) is bound by residues 161-163 and Ile-231; that span reads GRS.

The protein belongs to the tetrahydrofolate dehydrogenase/cyclohydrolase family. Homodimer.

It carries out the reaction (6R)-5,10-methylene-5,6,7,8-tetrahydrofolate + NADP(+) = (6R)-5,10-methenyltetrahydrofolate + NADPH. The catalysed reaction is (6R)-5,10-methenyltetrahydrofolate + H2O = (6R)-10-formyltetrahydrofolate + H(+). It functions in the pathway one-carbon metabolism; tetrahydrofolate interconversion. Its function is as follows. Catalyzes the oxidation of 5,10-methylenetetrahydrofolate to 5,10-methenyltetrahydrofolate and then the hydrolysis of 5,10-methenyltetrahydrofolate to 10-formyltetrahydrofolate. This chain is Bifunctional protein FolD, found in Protochlamydia amoebophila (strain UWE25).